A 254-amino-acid chain; its full sequence is MLTIADVEFESRLFTGTGKFSNSQVMLEAITASKSQLVTVAMKRIDFKMGLDDLLTPLRQAGVRLLPNTSGARNAKEAVFAAELAREMLGTHWIKLEIHPDPKYLMPDAIETLEAARILCEKGFIVMPYVHADPVLCRRLEEVGCAAVMPLASPIGSNQGLVTESFLKIIIEQARVPVVIDAGIGAPSQAARAMELGADAVLVNTAIASSASPIVMAECFKEAVQCGRRAFEAGLGRVQTGAVHTSPLTGFLNQ.

The Schiff-base intermediate with DXP role is filled by Lys-95. 1-deoxy-D-xylulose 5-phosphate-binding positions include Gly-156, 182 to 183 (AG), and 204 to 205 (NT).

Belongs to the ThiG family. Homotetramer. Forms heterodimers with either ThiH or ThiS.

It localises to the cytoplasm. It catalyses the reaction [ThiS sulfur-carrier protein]-C-terminal-Gly-aminoethanethioate + 2-iminoacetate + 1-deoxy-D-xylulose 5-phosphate = [ThiS sulfur-carrier protein]-C-terminal Gly-Gly + 2-[(2R,5Z)-2-carboxy-4-methylthiazol-5(2H)-ylidene]ethyl phosphate + 2 H2O + H(+). It functions in the pathway cofactor biosynthesis; thiamine diphosphate biosynthesis. Catalyzes the rearrangement of 1-deoxy-D-xylulose 5-phosphate (DXP) to produce the thiazole phosphate moiety of thiamine. Sulfur is provided by the thiocarboxylate moiety of the carrier protein ThiS. In vitro, sulfur can be provided by H(2)S. The protein is Thiazole synthase of Shewanella baltica (strain OS195).